Reading from the N-terminus, the 375-residue chain is DNA replication and repair protein RecF (375 aa).

Residue 30 to 37 participates in ATP binding; the sequence is GENAQGKT.

It belongs to the RecF family.

The protein localises to the cytoplasm. In terms of biological role, the RecF protein is involved in DNA metabolism; it is required for DNA replication and normal SOS inducibility. RecF binds preferentially to single-stranded, linear DNA. It also seems to bind ATP. This chain is DNA replication and repair protein RecF, found in Bacillus mycoides (strain KBAB4) (Bacillus weihenstephanensis).